A 488-amino-acid polypeptide reads, in one-letter code: L-amino oxidase (488 aa).

FAD is bound by residues 60–61 (MS), 80–81 (EA), arginine 88, and 104–107 (GPMR). 2 residues coordinate substrate: arginine 107 and tyrosine 388. An intrachain disulfide couples cysteine 347 to cysteine 428. FAD-binding positions include glutamate 474 and 481–486 (GWIDST). 481-482 (GW) lines the substrate pocket.

This sequence belongs to the flavin monoamine oxidase family. FIG1 subfamily. As to quaternary structure, monomer. This is in contrast with most of its orthologs, that are non-covalently linked homodimers. FAD is required as a cofactor. Post-translationally, N-glycosylated. Expressed by the venom gland.

Its subcellular location is the secreted. It carries out the reaction an L-alpha-amino acid + O2 + H2O = a 2-oxocarboxylate + H2O2 + NH4(+). It catalyses the reaction L-leucine + O2 + H2O = 4-methyl-2-oxopentanoate + H2O2 + NH4(+). Functionally, catalyzes an oxidative deamination of predominantly hydrophobic and aromatic L-amino acids, thus producing hydrogen peroxide that may contribute to the diverse toxic effects of this enzyme. Shows activity on L-Leu. Exhibits diverse biological activities, such as hemorrhage, hemolysis, edema, antibacterial and antiparasitic activities, as well as regulation of platelet aggregation. When tested on SW480 and SW620 human colon cancer cells, shows inhibition of cell proliferation, and induction of apoptosis, which is probably a consequence of the increased caspase-3 activity and the decreased Bcl-2 expression. The sequence is that of L-amino oxidase from Trimeresurus purpureomaculatus (Mangrove pit viper).